The following is a 434-amino-acid chain: Chaperone SurA (434 aa).

The signal sequence occupies residues 1 to 22 (MKPSKHLIFALFALAISQPTMA). PpiC domains are found at residues 173-274 (DVEY…KIMD) and 283-383 (IEEV…QLEE).

It is found in the periplasm. It carries out the reaction [protein]-peptidylproline (omega=180) = [protein]-peptidylproline (omega=0). In terms of biological role, chaperone involved in the correct folding and assembly of outer membrane proteins. Recognizes specific patterns of aromatic residues and the orientation of their side chains, which are found more frequently in integral outer membrane proteins. May act in both early periplasmic and late outer membrane-associated steps of protein maturation. The protein is Chaperone SurA of Shewanella oneidensis (strain ATCC 700550 / JCM 31522 / CIP 106686 / LMG 19005 / NCIMB 14063 / MR-1).